Here is a 131-residue protein sequence, read N- to C-terminus: Proline-rich protein 3 (131 aa).

The tract at residues 1–77 is disordered; the sequence is LHRGPPGSRG…KEQRNPRRLK (77 aa). The segment covering 12–25 has biased composition (pro residues); sequence MIPPLLSLPPPPRG. A compositionally biased stretch (gly residues) spans 28-44; the sequence is PLRGGLGPRSGPYGRGW. Residues 98–126 form a C3H1-type zinc finger; sequence KSDRPVCRHFAKKGHCRYEDLCAFYHPGA.

The sequence is that of Proline-rich protein 3 (PRR3) from Sus scrofa (Pig).